The chain runs to 208 residues: GTP-binding protein Rho1 (208 aa).

19–26 contributes to the GTP binding site; sequence GDGACGKT. Positions 41–49 match the Effector region motif; sequence YVPTVFDNY. GTP is bound by residues 66 to 70 and 124 to 127; these read DTAGQ and CKAD. The segment at 188-208 is disordered; that stretch reads GKQGKSKPKTKSSKKKKCVVL. The segment covering 191–208 has biased composition (basic residues); it reads GKSKPKTKSSKKKKCVVL. Cysteine 205 is modified (cysteine methyl ester). Cysteine 205 is lipidated: S-geranylgeranyl cysteine. Positions 206-208 are cleaved as a propeptide — removed in mature form; that stretch reads VVL.

Belongs to the small GTPase superfamily. Rho family.

The protein resides in the cell membrane. The protein is GTP-binding protein Rho1 (RHO1) of Kluyveromyces lactis (strain ATCC 8585 / CBS 2359 / DSM 70799 / NBRC 1267 / NRRL Y-1140 / WM37) (Yeast).